We begin with the raw amino-acid sequence, 240 residues long: Protein CDV3 homolog A (240 aa).

The span at 1–15 (MAEPQEKSLDDFFAK) shows a compositional bias: basic and acidic residues. Positions 1-204 (MAEPQEKSLD…TESRREKEME (204 aa)) are disordered. Position 2 is an N-acetylalanine (A2). Over residues 27–52 (SGSAAGSRGSARPPDGAPSSSSSMSG) the composition is skewed to low complexity. Over residues 57–73 (VKKEKSGKSDNPDQLQE) the composition is skewed to basic and acidic residues. Composition is skewed to polar residues over residues 127 to 141 (DKSS…QAQA) and 181 to 192 (SDTQFPSLQATA). Positions 193 to 204 (KHTESRREKEME) are enriched in basic and acidic residues.

Belongs to the CDV3 family.

It is found in the cytoplasm. This is Protein CDV3 homolog A (cdv3-a) from Xenopus laevis (African clawed frog).